Consider the following 328-residue polypeptide: GMP reductase (328 aa).

Cys174 acts as the Thioimidate intermediate in catalysis. Ile203–Val226 provides a ligand contact to NADP(+).

The protein belongs to the IMPDH/GMPR family. GuaC type 2 subfamily.

It carries out the reaction IMP + NH4(+) + NADP(+) = GMP + NADPH + 2 H(+). Its function is as follows. Catalyzes the irreversible NADPH-dependent deamination of GMP to IMP. It functions in the conversion of nucleobase, nucleoside and nucleotide derivatives of G to A nucleotides, and in maintaining the intracellular balance of A and G nucleotides. The chain is GMP reductase from Staphylococcus saprophyticus subsp. saprophyticus (strain ATCC 15305 / DSM 20229 / NCIMB 8711 / NCTC 7292 / S-41).